A 735-amino-acid chain; its full sequence is Photosystem I P700 chlorophyll a apoprotein A2 (735 aa).

8 helical membrane passes run 47 to 70 (IFAS…FHVA), 136 to 159 (LYIG…LHLQ), 176 to 200 (LNHH…HVAI), 274 to 292 (MAHH…GHMY), 331 to 354 (LHFQ…QHMY), 370 to 396 (ASLY…IFFI), 418 to 440 (AIIS…LYVH), and 518 to 536 (FLVH…LILV). [4Fe-4S] cluster is bound by residues Cys-560 and Cys-569. 2 consecutive transmembrane segments (helical) span residues 576 to 597 (AFYL…YFHW) and 644 to 666 (LSVW…MFLI). 3 residues coordinate chlorophyll a: His-655, Met-663, and Tyr-671. Position 672 (Trp-672) interacts with phylloquinone. The chain crosses the membrane as a helical span at residues 708–728 (VVGLAHFSAGYILTYAAFLIA).

This sequence belongs to the PsaA/PsaB family. The PsaA/B heterodimer binds the P700 chlorophyll special pair and subsequent electron acceptors. PSI consists of a core antenna complex that captures photons, and an electron transfer chain that converts photonic excitation into a charge separation. The eukaryotic PSI reaction center is composed of at least 11 subunits. It depends on P700 is a chlorophyll a/chlorophyll a' dimer, A0 is one or more chlorophyll a, A1 is one or both phylloquinones and FX is a shared 4Fe-4S iron-sulfur center. as a cofactor.

The protein resides in the plastid. It localises to the chloroplast thylakoid membrane. It carries out the reaction reduced [plastocyanin] + hnu + oxidized [2Fe-2S]-[ferredoxin] = oxidized [plastocyanin] + reduced [2Fe-2S]-[ferredoxin]. Its function is as follows. PsaA and PsaB bind P700, the primary electron donor of photosystem I (PSI), as well as the electron acceptors A0, A1 and FX. PSI is a plastocyanin/cytochrome c6-ferredoxin oxidoreductase, converting photonic excitation into a charge separation, which transfers an electron from the donor P700 chlorophyll pair to the spectroscopically characterized acceptors A0, A1, FX, FA and FB in turn. Oxidized P700 is reduced on the lumenal side of the thylakoid membrane by plastocyanin or cytochrome c6. This is Photosystem I P700 chlorophyll a apoprotein A2 from Tupiella akineta (Green alga).